We begin with the raw amino-acid sequence, 115 residues long: C-C motif chemokine 6 (115 aa).

The N-terminal stretch at 1–21 (MRHSKTAISFFILVAVLGSQA) is a signal peptide. Intrachain disulfides connect C49-C72, C50-C88, and C59-C99.

Belongs to the intercrine beta (chemokine CC) family.

It localises to the secreted. The polypeptide is C-C motif chemokine 6 (Ccl6) (Rattus norvegicus (Rat)).